The following is a 171-amino-acid chain: Adenine phosphoribosyltransferase (171 aa).

This sequence belongs to the purine/pyrimidine phosphoribosyltransferase family. Homodimer.

Its subcellular location is the cytoplasm. The enzyme catalyses AMP + diphosphate = 5-phospho-alpha-D-ribose 1-diphosphate + adenine. It functions in the pathway purine metabolism; AMP biosynthesis via salvage pathway; AMP from adenine: step 1/1. In terms of biological role, catalyzes a salvage reaction resulting in the formation of AMP, that is energically less costly than de novo synthesis. This Shouchella clausii (strain KSM-K16) (Alkalihalobacillus clausii) protein is Adenine phosphoribosyltransferase.